We begin with the raw amino-acid sequence, 34 residues long: Protamine (34 aa).

A disordered region spans residues 1 to 34; sequence PRRRRQASRPVRRRRRTRRSTAERRRRRVVRRRR.

In terms of tissue distribution, testis.

It is found in the nucleus. Its subcellular location is the chromosome. Its function is as follows. Protamines substitute for histones in the chromatin of sperm during the haploid phase of spermatogenesis. They compact sperm DNA into a highly condensed, stable and inactive complex. In Dicentrarchus labrax (European seabass), this protein is Protamine.